We begin with the raw amino-acid sequence, 339 residues long: N-acetylornithine carbamoyltransferase (339 aa).

Residues 49–52, Trp-77, and Arg-112 contribute to the carbamoyl phosphate site; that span reads SMRT. Glu-144 lines the N(2)-acetyl-L-ornithine pocket. A carbamoyl phosphate-binding site is contributed by 148 to 151; sequence HPCQ. Lys-252 and Leu-295 together coordinate N(2)-acetyl-L-ornithine. 294 to 295 is a binding site for carbamoyl phosphate; it reads CL. The residue at position 302 (Lys-302) is an N6-carboxylysine. Arg-322 serves as a coordination point for carbamoyl phosphate.

It belongs to the aspartate/ornithine carbamoyltransferase superfamily. AOTCase family. As to quaternary structure, homotrimer.

The protein resides in the cytoplasm. It carries out the reaction N(2)-acetyl-L-ornithine + carbamoyl phosphate = N(2)-acetyl-L-citrulline + phosphate + H(+). It participates in amino-acid biosynthesis; L-arginine biosynthesis. Carboxylation at Lys-302 increases the catalytic activity of the enzyme. Is potently inhibited by N(alpha)-acetyl-N(delta)-phosphonoacetyl-L-ornithine (PALAO). In terms of biological role, catalyzes the transfer of the carbamoyl group from carbamoyl phosphate to the delta-amino group of N(2)-acetyl-L-ornithine to produce N(2)-acetyl-L-citrulline. This is a step in an alternative arginine biosynthesis pathway. The enzyme has no activity with ornithine. The sequence is that of N-acetylornithine carbamoyltransferase from Xanthomonas campestris pv. campestris (strain ATCC 33913 / DSM 3586 / NCPPB 528 / LMG 568 / P 25).